The primary structure comprises 346 residues: DnaJ protein ERDJ3B (346 aa).

The signal sequence occupies residues 1–23 (MAIRWSELCIVLFALSYAICVLA). The J domain maps to 26 to 91 (SYYDVLQVPK…EKREIYNKYG (66 aa)). N267 is a glycosylation site (N-linked (GlcNAc...) asparagine).

As to quaternary structure, interacts with SDF2 and MED37A/BIP1. In terms of processing, N-glycosylated. In terms of tissue distribution, expressed in leaves, flower buds and flowers.

It is found in the endoplasmic reticulum lumen. In terms of biological role, regulates protein folding in the endoplasmic reticulum (ER) lumen. Forms a complex in the ER with SDF2 and MED37A/BIP1 which is required for the proper accumulation and function of the surface-exposed leucine-rich repeat receptor kinases EFR involved in pathogen-associated molecular pattern (PAMP) triggered immunity. This chain is DnaJ protein ERDJ3B (ERDJ3B), found in Arabidopsis thaliana (Mouse-ear cress).